Here is a 959-residue protein sequence, read N- to C-terminus: Glycine dehydrogenase (decarboxylating) (959 aa).

Position 708 is an N6-(pyridoxal phosphate)lysine (Lys-708).

The protein belongs to the GcvP family. The glycine cleavage system is composed of four proteins: P, T, L and H. The cofactor is pyridoxal 5'-phosphate.

The catalysed reaction is N(6)-[(R)-lipoyl]-L-lysyl-[glycine-cleavage complex H protein] + glycine + H(+) = N(6)-[(R)-S(8)-aminomethyldihydrolipoyl]-L-lysyl-[glycine-cleavage complex H protein] + CO2. Its function is as follows. The glycine cleavage system catalyzes the degradation of glycine. The P protein binds the alpha-amino group of glycine through its pyridoxal phosphate cofactor; CO(2) is released and the remaining methylamine moiety is then transferred to the lipoamide cofactor of the H protein. In Yersinia pseudotuberculosis serotype O:1b (strain IP 31758), this protein is Glycine dehydrogenase (decarboxylating).